A 466-amino-acid polypeptide reads, in one-letter code: Asparagine--tRNA ligase (466 aa).

It belongs to the class-II aminoacyl-tRNA synthetase family. In terms of assembly, homodimer.

Its subcellular location is the cytoplasm. The catalysed reaction is tRNA(Asn) + L-asparagine + ATP = L-asparaginyl-tRNA(Asn) + AMP + diphosphate + H(+). In Wigglesworthia glossinidia brevipalpis, this protein is Asparagine--tRNA ligase.